The following is a 551-amino-acid chain: Structure-specific endonuclease subunit MUS81 (551 aa).

Residues 84–93 (HRTSGGDHAP) show a composition bias toward basic and acidic residues. Residues 84–130 (HRTSGGDHAPDSPSGENSPAPQGRLAEVQDSSMPVPAQPKAGGSGSY) form a disordered region. Ser-95 and Ser-101 each carry phosphoserine. The interval 125-244 (GGSGSYWPAR…PGEETAVPGA (120 aa)) is interaction with BLM. Residues 131–230 (WPARHSGARV…GLSLLNVGIG (100 aa)) are winged helix domain (WHD); critical for endonuclease activity. One can recognise an ERCC4 domain in the interval 270-372 (LLCVDIGETR…RRVYLVEEHG (103 aa)). Residues Asp-274, Glu-277, and Asp-307 contribute to the active site. Mg(2+) is bound by residues Asp-274, Glu-277, Asp-307, Glu-333, and Arg-334. Positions 471–545 (VREVFARQLM…LSRTLSQLYC (75 aa)) are helix-hairpin-helix (2HhH); involved in DNA recognition and bending.

Belongs to the XPF family. In terms of assembly, part of the heterodimeric DNA structure-specific endonuclease complex MUS81-EME1. Part of the heterodimeric DNA structure-specific endonuclease complex MUS81-EME2. Interacts with BLM; may stimulate the endonuclease activity of MUS81. Interacts with SLX4/BTBD12; this interaction is direct and links the MUS81-EME1 complex to SLX4, which may coordinate the action of the structure-specific endonuclease during DNA repair. Interacts with DCLRE1B/Apollo. Interacts with RECQL5; this interaction stimulates mitotic DNA synthesis. Interacts with CHEK2. Mg(2+) serves as cofactor. As to expression, widely expressed.

It localises to the nucleus. The protein resides in the nucleolus. Its function is as follows. Catalytic subunit of two functionally distinct, structure-specific, heterodimeric DNA endonucleases MUS81-EME1 and MUS81-EME2 that are involved in the maintenance of genome stability. Both endonucleases have essentially the same substrate specificity though MUS81-EME2 is more active than its MUS81-EME1 counterpart. Both cleave 3'-flaps and nicked Holliday junctions, and exhibit limited endonuclease activity with 5' flaps and nicked double-stranded DNAs. MUS81-EME2 which is active during the replication of DNA is more specifically involved in replication fork processing. Replication forks frequently encounter obstacles to their passage, including DNA base lesions, DNA interstrand cross-links, difficult-to-replicate sequences, transcription bubbles, or tightly bound proteins. One mechanism for the restart of a stalled replication fork involves nucleolytic cleavage mediated by the MUS81-EME2 endonuclease. By acting upon the stalled fork, MUS81-EME2 generates a DNA double-strand break (DSB) that can be repaired by homologous recombination, leading to the restoration of an active fork. MUS81-EME2 could also function in telomere maintenance. MUS81-EME1, on the other hand, is active later in the cell cycle and functions in the resolution of mitotic recombination intermediates including the Holliday junctions, the four-way DNA intermediates that form during homologous recombination. The sequence is that of Structure-specific endonuclease subunit MUS81 from Homo sapiens (Human).